Reading from the N-terminus, the 149-residue chain is D-aminoacyl-tRNA deacylase (149 aa).

The Gly-cisPro motif, important for rejection of L-amino acids motif lies at glycine 137 to proline 138.

This sequence belongs to the DTD family. Homodimer.

The protein resides in the cytoplasm. It carries out the reaction glycyl-tRNA(Ala) + H2O = tRNA(Ala) + glycine + H(+). The catalysed reaction is a D-aminoacyl-tRNA + H2O = a tRNA + a D-alpha-amino acid + H(+). Its function is as follows. An aminoacyl-tRNA editing enzyme that deacylates mischarged D-aminoacyl-tRNAs. Also deacylates mischarged glycyl-tRNA(Ala), protecting cells against glycine mischarging by AlaRS. Acts via tRNA-based rather than protein-based catalysis; rejects L-amino acids rather than detecting D-amino acids in the active site. By recycling D-aminoacyl-tRNA to D-amino acids and free tRNA molecules, this enzyme counteracts the toxicity associated with the formation of D-aminoacyl-tRNA entities in vivo and helps enforce protein L-homochirality. The polypeptide is D-aminoacyl-tRNA deacylase (Caldicellulosiruptor saccharolyticus (strain ATCC 43494 / DSM 8903 / Tp8T 6331)).